A 250-amino-acid polypeptide reads, in one-letter code: Ribosome-inactivating protein luffin-B (250 aa).

E160 is an active-site residue.

Belongs to the ribosome-inactivating protein family. Type 1 RIP subfamily.

It catalyses the reaction Endohydrolysis of the N-glycosidic bond at one specific adenosine on the 28S rRNA.. In Luffa aegyptiaca (Sponge gourd), this protein is Ribosome-inactivating protein luffin-B.